Here is an 818-residue protein sequence, read N- to C-terminus: Probable beta-glucosidase I (818 aa).

Residue Asn176 is glycosylated (N-linked (GlcNAc...) asparagine). Asp204 is an active-site residue. One can recognise a PA14 domain in the interval 374–534; that stretch reads DGKPGFTFRV…SQEELISNAV (161 aa). Asn453 and Asn472 each carry an N-linked (GlcNAc...) asparagine glycan.

It belongs to the glycosyl hydrolase 3 family.

It localises to the secreted. The catalysed reaction is Hydrolysis of terminal, non-reducing beta-D-glucosyl residues with release of beta-D-glucose.. It participates in glycan metabolism; cellulose degradation. Its function is as follows. Beta-glucosidases are one of a number of cellulolytic enzymes involved in the degradation of cellulosic biomass. Catalyzes the last step releasing glucose from the inhibitory cellobiose. The protein is Probable beta-glucosidase I (bglI) of Aspergillus niger (strain ATCC MYA-4892 / CBS 513.88 / FGSC A1513).